A 782-amino-acid chain; its full sequence is MVRTKNQSSSSSASSSTKSPVKISGGTTNRSRSCSDALIDDGNSKSSSKPTSNNRQRTTTNNNTTAITTTPGSSPDNDDDDTTTTDADLTPTSGNAPRGGNSSVHKQNLYVVSFPIIFLFNVLRSLIYQLFCIFRYLYGASTKVIYRSPNRRDCNIEIVVQNSKEQQQQHQHQQAIIHCPLERRGNISGIEQTLAQALPQRQRAIQPLEMAGNRAGGNYSPGPGDPLLAKQKHHHRRAFEYISKALKIDEENEGHKELAIELYRKGIKELEDGIAVDCWSGRGDVWDRAQRLHDKMQTNLSMARDRLHFLALREEDLQLQRLSLKEQQQKKKSPQQQPQQQQQHTFKQPMLVGQTNSSGGSGSTKVPLRSSGYGLKPSATNISRAMPAASGRKLTIGNKRPGNLPVVNKSQTLPRNLGSKTSSTSVGAALQRQPGKTAATPPAVRRQFSSGRNTPPQRSRTPINNNAAGGSGSGASTPMVSVKGVEQKLVQLILDEIVEGGAKVEWTDIAGQDVAKQALQEMVILPSVRPELFTGLRAPAKGLLLFGPPGNGKTLLARAVATECSATFLNISAASLTSKYVGDGEKLVRALFAVARHMQPSIIFIDEVDSLLSERSSNEHEASRRLKTEFLVEFDGLPGNPDGDRIVVLAATNRPQELDEAALRRFTKRVYVSLPDVQTRELLLNRLLQKQGSPLDSDALGRLAKITEGYSGSDLTALAKDAALEPIRELNVEQVKCLDISAMRQITEKDFHNSLKRIRRSVAPQSLNSYEKWSQDYGDITI.

A disordered region spans residues 1–103 (MVRTKNQSSS…GNAPRGGNSS (103 aa)). At 1–115 (MVRTKNQSSS…KQNLYVVSFP (115 aa)) the chain is on the cytoplasmic side. A required for localization to punctate cytoplasmic foci region spans residues 1-212 (MVRTKNQSSS…RAIQPLEMAG (212 aa)). Over residues 8-19 (SSSSSASSSTKS) the composition is skewed to low complexity. Positions 25–34 (GGTTNRSRSC) are enriched in polar residues. Low complexity-rich tracts occupy residues 44–75 (SKSS…GSSP) and 84–93 (TTDADLTPTS). The segment at residues 116 to 136 (IIFLFNVLRSLIYQLFCIFRY) is an intramembrane region (helical). Topologically, residues 137-782 (LYGASTKVIY…WSQDYGDITI (646 aa)) are cytoplasmic. Positions 210–782 (MAGNRAGGNY…WSQDYGDITI (573 aa)) are sufficient for interaction with microtubules and microtubule severing. An MIT domain is found at 235 to 310 (HRRAFEYISK…SMARDRLHFL (76 aa)). The segment at 325–479 (KEQQQKKKSP…GSGSGASTPM (155 aa)) is disordered. Low complexity predominate over residues 334–343 (PQQQPQQQQQ). Polar residues-rich tracts occupy residues 408-426 (NKSQ…STSV) and 447-463 (QFSS…RTPI). The required for interaction with microtubules stretch occupies residues 465-479 (NNAAGGSGSGASTPM). 547–554 (GPPGNGKT) serves as a coordination point for ATP.

It belongs to the AAA ATPase family. Spastin subfamily. Homohexamer. The homohexamer is stabilized by ATP-binding. The homohexamer may adopt a ring conformation through which microtubules pass prior to being severed. Interacts with microtubules. Interacts with atl; may be involved in microtubule dynamics.

It is found in the membrane. Its subcellular location is the cytoplasm. It localises to the cytoskeleton. The protein resides in the microtubule organizing center. The protein localises to the centrosome. It is found in the chromosome. Its subcellular location is the lipid droplet. The enzyme catalyses n ATP + n H2O + a microtubule = n ADP + n phosphate + (n+1) alpha/beta tubulin heterodimers.. Functionally, ATP-dependent microtubule severing protein. Stimulates microtubule minus-end depolymerization and poleward microtubule flux in the mitotic spindle. Regulates microtubule stability in the neuromuscular junction synapse. Involved in lipid metabolism by regulating the size and distribution of lipid droplets. Involved in axon regeneration by regulating microtubule severing. The chain is Spastin from Drosophila grimshawi (Hawaiian fruit fly).